Here is a 286-residue protein sequence, read N- to C-terminus: Urease accessory protein UreD (286 aa).

The protein belongs to the UreD family. As to quaternary structure, ureD, UreF and UreG form a complex that acts as a GTP-hydrolysis-dependent molecular chaperone, activating the urease apoprotein by helping to assemble the nickel containing metallocenter of UreC. The UreE protein probably delivers the nickel.

It localises to the cytoplasm. Required for maturation of urease via the functional incorporation of the urease nickel metallocenter. The sequence is that of Urease accessory protein UreD from Rhodopseudomonas palustris (strain BisA53).